A 554-amino-acid polypeptide reads, in one-letter code: Urocanate hydratase (554 aa).

NAD(+)-binding positions include G51 to G52, Q129, G175 to G177, E195, N241 to A242, Q262 to H266, Y272 to L273, and Y321. C409 is an active-site residue. G491 contributes to the NAD(+) binding site.

It belongs to the urocanase family. NAD(+) serves as cofactor.

It localises to the cytoplasm. The enzyme catalyses 4-imidazolone-5-propanoate = trans-urocanate + H2O. It functions in the pathway amino-acid degradation; L-histidine degradation into L-glutamate; N-formimidoyl-L-glutamate from L-histidine: step 2/3. In terms of biological role, catalyzes the conversion of urocanate to 4-imidazolone-5-propionate. In Caulobacter vibrioides (strain ATCC 19089 / CIP 103742 / CB 15) (Caulobacter crescentus), this protein is Urocanate hydratase.